The chain runs to 343 residues: Thromboxane A2 receptor (343 aa).

Topologically, residues 1–29 (MWPNGSSLGPCFRPTNITLEERRLIASPW) are extracellular. N-linked (GlcNAc...) asparagine glycosylation is found at Asn-4 and Asn-16. The helical transmembrane segment at 30-52 (FAASFCVVGLASNLLALSVLAGA) threads the bilayer. The Cytoplasmic portion of the chain corresponds to 53 to 66 (RQGGSHTRSSFLTF). Residues 67–87 (LCGLVLTDFLGLLVTGTIVVS) traverse the membrane as a helical segment. Over 88–106 (QHAALFEWHAVDPGCRLCR) the chain is Extracellular. Cys-105 and Cys-183 form a disulfide bridge. A helical membrane pass occupies residues 107–128 (FMGVVMIFFGLSPLLLGAAMAS). Topologically, residues 129 to 149 (ERYLGITRPFSRPAVASQRRA) are cytoplasmic. A helical membrane pass occupies residues 150–172 (WATVGLVWAAALALGLLPLLGVG). Topologically, residues 173 to 193 (RYTVQYPGSWCFLTLGAESGD) are extracellular. The chain crosses the membrane as a helical span at residues 194-219 (VAFGLLFSMLGGLSVGLSFLLNTVSV). Topologically, residues 220–246 (ATLCHVYHGQEAAQQRPRDSEVEMMAQ) are cytoplasmic. Residues 247-270 (LLGIMVVASVCWLPLLVFIAQTVL) form a helical membrane-spanning segment. Over 271-289 (RNPPAMSPAGQLSRTTEKE) the chain is Extracellular. A helical membrane pass occupies residues 290–311 (LLIYLRVATWNQILDPWVYILF). Over 312–343 (RRAVLRRLQPRLSTRPRSLSLQPQLTQRSGLQ) the chain is Cytoplasmic. 2 positions are modified to phosphoserine: Ser-329 and Ser-331.

The protein belongs to the G-protein coupled receptor 1 family. As to quaternary structure, interacts with RPGRIP1L. Interacts with PSMA3. Interacts with RACK1; the interaction regulates TBXA2R cell surface expression.

The protein localises to the cell membrane. Its function is as follows. Receptor for thromboxane A2 (TXA2), a potent stimulator of platelet aggregation. The activity of this receptor is mediated by a G-protein that activates a phosphatidylinositol-calcium second messenger system. In the kidney, the binding of TXA2 to glomerular TP receptors causes intense vasoconstriction. Activates phospholipase C. Functionally, activates adenylyl cyclase. Inhibits adenylyl cyclase. This Homo sapiens (Human) protein is Thromboxane A2 receptor (TBXA2R).